Here is a 442-residue protein sequence, read N- to C-terminus: Ankyrin repeat and MYND domain-containing protein 2 (442 aa).

3 ANK repeats span residues Asn-45–Cys-74, His-79–Val-108, and Lys-159–Leu-188. 8 residues coordinate Zn(2+): Cys-320, Cys-323, Cys-332, Cys-335, Cys-341, Cys-345, His-353, and Cys-357. The MYND-type zinc finger occupies Cys-320 to Cys-357. Positions Thr-401 to Leu-421 are enriched in basic and acidic residues. The segment at Thr-401–Glu-442 is disordered.

As to quaternary structure, interacts with the retinal-specific guanylyl cyclase GC1.

Its subcellular location is the cell projection. It is found in the cilium. May be involved in the trafficking of signaling proteins to the cilia. The polypeptide is Ankyrin repeat and MYND domain-containing protein 2 (ANKMY2) (Bos taurus (Bovine)).